A 511-amino-acid polypeptide reads, in one-letter code: Xylose import ATP-binding protein XylG (511 aa).

ABC transporter domains follow at residues 6–244 (LEMR…VGRE) and 261–506 (FEAR…IGKP). 38–45 (GENGAGKS) serves as a coordination point for ATP.

Belongs to the ABC transporter superfamily. Xylose importer (TC 3.A.1.2.4) family. In terms of assembly, the complex is composed of two ATP-binding proteins (XylG), two transmembrane proteins (XylH) and a solute-binding protein (XylF).

The protein resides in the cell inner membrane. It carries out the reaction D-xylose(out) + ATP + H2O = D-xylose(in) + ADP + phosphate + H(+). Part of the ABC transporter complex XylFGH involved in xylose import. Responsible for energy coupling to the transport system. The polypeptide is Xylose import ATP-binding protein XylG (Brucella abortus (strain 2308)).